A 381-amino-acid chain; its full sequence is Actin-binding Rho-activating protein (381 aa).

2 disordered regions span residues 39 to 156 (ENSI…SHGS) and 179 to 207 (QEEPTWRSDSVDTEDSGYGGEAEERPEQD). Polar residues predominate over residues 69–79 (PTSHQKAQSAP). Residues 97–110 (KAPEVSHIKKKEVS) are compositionally biased toward basic and acidic residues. Residues S156 and S188 each carry the phosphoserine modification. The span at 179–188 (QEEPTWRSDS) shows a compositional bias: basic and acidic residues. Actin-binding stretches follow at residues 199 to 299 (EAEE…AERA) and 300 to 381 (KRAE…TLLK). Interaction with actin stretches follow at residues 240-285 (SPVG…GDEG) and 352-381 (MRARKHGLVDFEGEMLWQGRDDHVVITLLK).

Binds F-actin and ABLIM1, ABLIM2 and ABLIM3. Interaction with ABLIM2 and ABLIM3 enhances activity.

It localises to the cytoplasm. It is found in the myofibril. Its subcellular location is the sarcomere. The protein resides in the cytoskeleton. In terms of biological role, acts as an activator of serum response factor (SRF)-dependent transcription possibly by inducing nuclear translocation of MKL1 or MKL2 and through a mechanism requiring Rho-actin signaling. The chain is Actin-binding Rho-activating protein from Homo sapiens (Human).